The sequence spans 65 residues: Hirudin-3B' (65 aa).

The interval 1–3 (VVY) is interaction with thrombin active site. 3 cysteine pairs are disulfide-bonded: Cys-6-Cys-14, Cys-16-Cys-28, and Cys-22-Cys-39. Residues 40 to 65 (VTGEGTPKPQSHNDGDFEEIPEEYLQ) are disordered. The O-linked (GalNAc...) threonine glycan is linked to Thr-45. Residues 55–65 (DFEEIPEEYLQ) form an interaction with fibrinogen-binding exosite of thrombin region. Residues 55–65 (DFEEIPEEYLQ) are compositionally biased toward acidic residues. Tyr-63 is modified (sulfotyrosine).

It belongs to the protease inhibitor I14 (hirudin) family.

It is found in the secreted. Its function is as follows. Hirudin is a potent thrombin-specific protease inhibitor. It forms a stable non-covalent complex with alpha-thrombin, thereby abolishing its ability to cleave fibrinogen. This Hirudo medicinalis (Medicinal leech) protein is Hirudin-3B'.